Here is a 475-residue protein sequence, read N- to C-terminus: RNA pseudouridine synthase 3, mitochondrial (475 aa).

The transit peptide at 1-15 (MLCRRRRVGAAVRWL) directs the protein to the mitochondrion. The segment at 40–74 (RLGKPKPGPRPRQLLSLPPFPGGGDGDPLPGRKAA) is disordered. Positions 90–160 (ADVPQEVVQA…GEIKKRYETI (71 aa)) constitute an S4 RNA-binding domain. The active site involves Asp230.

Belongs to the pseudouridine synthase RluA family.

It localises to the mitochondrion. It carries out the reaction a uridine in RNA = a pseudouridine in RNA. This is RNA pseudouridine synthase 3, mitochondrial from Oryza sativa subsp. japonica (Rice).